The sequence spans 322 residues: MFKSTLNIAVAIVCSSLVTLTGCEPKVAQSQVIQPLETPIVIEHNLGQTVISNRPQRVAALDMNEVDFLDQLNVPIAGMVKDFVPHFLEKYKNTPDISDLGAIVQPNMEKIYALKPDLVLMTPLHANQYEELSKLAPTVHFDIDFRNSHGHHVDIIKQHVIDLGEIFNKQTLAQKKVAEIDAKVDEVQALTAERSEKALVVMHNNGSFSSFGIESRYGFVFDVLGVKPASTEIAASLHGQPISSEFINQANPDILYIIDRTAVMEGKPVIDAEHLANPLLRQTKAWKNGKVIFVDADAWYITSASITSLKIVIDDIIKGYQS.

The first 22 residues, 1–22 (MFKSTLNIAVAIVCSSLVTLTG), serve as a signal peptide directing secretion. Residue Cys-23 is the site of N-palmitoyl cysteine attachment. The S-diacylglycerol cysteine moiety is linked to residue Cys-23. Positions 57-322 (RVAALDMNEV…IDDIIKGYQS (266 aa)) constitute a Fe/B12 periplasmic-binding domain.

The protein belongs to the bacterial solute-binding protein 8 family. In terms of assembly, part of an iron transport system composed of the outer membrane receptor FatA, the periplasmic binding protein FatB and the inner membrane proteins FatC and FatD.

Its subcellular location is the cell inner membrane. Involved in the uptake of iron in complex with the siderophore anguibactin. Binds ferric-anguibactin in the periplasm and mediates its transport into the cytoplasm. The protein is Ferric-anguibactin-binding protein FatB of Vibrio anguillarum (strain ATCC 68554 / 775) (Listonella anguillarum).